The following is a 311-amino-acid chain: Inositol oxygenase 1 (311 aa).

Over residues 1–11 (MTILIDRHSDQ) the composition is skewed to basic and acidic residues. Positions 1–29 (MTILIDRHSDQNDAGDEIVEKNQGNGKEE) are disordered. Substrate-binding positions include Arg-52 and 109 to 111 (DES). Fe cation-binding residues include His-122, His-147, and Asp-148. Residues Lys-151 and 168–169 (GD) each bind substrate. Fe cation contacts are provided by His-220, His-246, and Asp-279. 246–247 (HS) contributes to the substrate binding site.

It belongs to the myo-inositol oxygenase family. It depends on Fe cation as a cofactor. Expressed in roots, young leaves, stems, flowers and siliques.

It is found in the cytoplasm. It carries out the reaction myo-inositol + O2 = D-glucuronate + H2O + H(+). The protein operates within polyol metabolism; myo-inositol degradation into D-glucuronate; D-glucuronate from myo-inositol: step 1/1. Catalyzes the oxygenative cleavage of myo-inositol to D-glucuronate. Involved in the biosynthesis of UDP-glucuronic acid (UDP-GlcA), providing nucleotide sugars for cell-wall polymers. May be also involved in plant ascorbate biosynthesis. In Arabidopsis thaliana (Mouse-ear cress), this protein is Inositol oxygenase 1 (MIOX1).